Consider the following 469-residue polypeptide: Receptor-type adenylate cyclase (469 aa).

Over 1 to 59 the chain is Extracellular; sequence VDTAEKLSKNGCASNYGATQISVWSMARALNASIPPLTNPMTPSMTFRNSNAGRISGVA. N-linked (GlcNAc...) asparagine glycosylation is present at N31. The chain crosses the membrane as a helical span at residues 60–80; that stretch reads LVGVIIGGALALFLVVALGVV. Topologically, residues 81–469 are cytoplasmic; the sequence is PYFFLHNTRD…IDLENDSTTS (389 aa). Residues 103–257 form the Guanylate cyclase domain; sequence TLIFTDIESS…RTSNMAARTE (155 aa). Positions 108 and 151 each coordinate Mg(2+).

The protein belongs to the adenylyl cyclase class-3 family. Requires Mg(2+) as cofactor.

It localises to the cell membrane. It carries out the reaction ATP = 3',5'-cyclic AMP + diphosphate. Could act as a receptor for an unknown ligand. In Trypanosoma equiperdum, this protein is Receptor-type adenylate cyclase (ESAG4C).